Here is a 332-residue protein sequence, read N- to C-terminus: D-amino acid oxidase (332 aa).

Residues Ala-8, Gly-9, Ile-10, Thr-39, Thr-40, Ala-45, Gly-46, Leu-47, Val-161, and Ser-180 each coordinate FAD. D-proline-binding residues include Tyr-218 and Arg-274. 2 residues coordinate D-serine: Tyr-218 and Arg-274. Positions 274, 305, 306, 308, and 310 each coordinate FAD. Gly-306 is a binding site for D-proline. Gly-306 lines the D-serine pocket. The Microbody targeting signal motif lies at 330 to 332 (AKL).

It belongs to the DAMOX/DASOX family. The cofactor is FAD.

It localises to the peroxisome matrix. The catalysed reaction is a D-alpha-amino acid + O2 + H2O = a 2-oxocarboxylate + H2O2 + NH4(+). It carries out the reaction D-alanine + O2 + H2O = pyruvate + H2O2 + NH4(+). The enzyme catalyses D-arginine + O2 + H2O = 5-guanidino-2-oxopentanoate + H2O2 + NH4(+). It catalyses the reaction D-asparagine + O2 + H2O = 2-oxosuccinamate + H2O2 + NH4(+). The catalysed reaction is D-cysteine + O2 + H2O = 2-oxo-3-sulfanylpropanoate + H2O2 + NH4(+). It carries out the reaction D-glutamine + O2 + H2O = 2-oxoglutaramate + H2O2 + NH4(+). The enzyme catalyses D-isoleucine + O2 + H2O = (R)-3-methyl-2-oxopentanoate + H2O2 + NH4(+). It catalyses the reaction D-leucine + O2 + H2O = 4-methyl-2-oxopentanoate + H2O2 + NH4(+). The catalysed reaction is D-lysine + O2 + H2O = 6-amino-2-oxohexanoate + H2O2 + NH4(+). It carries out the reaction D-methionine + O2 + H2O = 4-methylsulfanyl-2-oxobutanoate + H2O2 + NH4(+). The enzyme catalyses D-phenylalanine + O2 + H2O = 3-phenylpyruvate + H2O2 + NH4(+). It catalyses the reaction D-proline + O2 = 1-pyrroline-2-carboxylate + H2O2. The catalysed reaction is D-valine + O2 + H2O = 3-methyl-2-oxobutanoate + H2O2 + NH4(+). It carries out the reaction D-histidine + O2 + H2O = 3-(imidazol-5-yl)pyruvate + H2O2 + NH4(+). The enzyme catalyses D-tyrosine + O2 + H2O = 3-(4-hydroxyphenyl)pyruvate + H2O2 + NH4(+). It catalyses the reaction D-serine + O2 + H2O = 3-hydroxypyruvate + H2O2 + NH4(+). The catalysed reaction is D-threonine + O2 + H2O = (S)-3-hydroxy-2-oxobutanoate + H2O2 + NH4(+). It carries out the reaction D-tryptophan + O2 + H2O = indole-3-pyruvate + H2O2 + NH4(+). Catalyzes the oxidative deamination of D-amino acids with broad substrate specificity. Could be responsible for the degradation of diet-derived D-alanine in the intestine. Maintains the asexual state of worms and represses early ovarian development. Following sexual induction, the enzyme is required for differentiation of oogonia into oocytes in the developing ovaries. The sequence is that of D-amino acid oxidase from Dugesia ryukyuensis (Freshwater planarian flatworm).